Reading from the N-terminus, the 577-residue chain is 9-cis-epoxycarotenoid dioxygenase NCED6, chloroplastic (577 aa).

The interval Met1–Lys25 is disordered. Fe cation contacts are provided by His276, His325, His390, and His563.

This sequence belongs to the carotenoid oxygenase family. It depends on Fe(2+) as a cofactor. As to expression, expressed before fertilization in male and female gametophytes, and then immediately after pollination, restricted to seed endosperm.

It is found in the plastid. The protein localises to the chloroplast stroma. It carries out the reaction a 9-cis-epoxycarotenoid + O2 = a 12'-apo-carotenal + 2-cis,4-trans-xanthoxin. It catalyses the reaction 9-cis-violaxanthin + O2 = (3S,5R,6S)-5,6-epoxy-3-hydroxy-5,6-dihydro-12'-apo-beta-caroten-12'-al + 2-cis,4-trans-xanthoxin. The enzyme catalyses 9'-cis-neoxanthin + O2 = (3S,5R,6R)-3,5-dihydroxy-6,7-didehydro-5,6-dihydro-12'-apo-beta-caroten-12'-al + 2-cis,4-trans-xanthoxin. Functionally, has a 11,12(11',12') 9-cis epoxycarotenoid cleavage activity. Catalyzes the first step of abscisic-acid biosynthesis from carotenoids. Contributes probably to abscisic acid synthesis for the induction of seed dormancy. The sequence is that of 9-cis-epoxycarotenoid dioxygenase NCED6, chloroplastic (NCED6) from Arabidopsis thaliana (Mouse-ear cress).